A 617-amino-acid chain; its full sequence is Kelch-like protein 9 (617 aa).

Residues 50-119 (CDVTLVPGDG…IYTAKLSLNM (70 aa)) form the BTB domain. Residues 154–255 (CVEVGRIANT…TPQDLINYVQ (102 aa)) form the BACK domain. Kelch repeat units lie at residues 299–347 (HLVT…VIGN), 348–399 (FLYV…ALKG), 400–446 (HLYA…VYGG), 448–493 (MYIS…TVGD), 495–545 (LYVI…VFEN), and 546–594 (KIYV…TLTV). Residues 595 to 617 (FPPEENPGSPSRESPLSAPSDHS) form a disordered region.

As to quaternary structure, component of the BCR(KLHL9-KLHL13) E3 ubiquitin ligase complex, at least composed of CUL3, KLHL9, KLHL13 and RBX1. Interacts with AURKB.

Its pathway is protein modification; protein ubiquitination. In terms of biological role, substrate-specific adapter of a BCR (BTB-CUL3-RBX1) E3 ubiquitin-protein ligase complex required for mitotic progression and cytokinesis. The BCR(KLHL9-KLHL13) E3 ubiquitin ligase complex mediates the ubiquitination of AURKB and controls the dynamic behavior of AURKB on mitotic chromosomes and thereby coordinates faithful mitotic progression and completion of cytokinesis. The polypeptide is Kelch-like protein 9 (Klhl9) (Mus musculus (Mouse)).